The chain runs to 275 residues: MKLIEQHQIFGGSQQVWAHNAQTLQCEMKFAVYLPNNPENRPLGVIYWLSGLTCTEQNFITKSGFQRYAAEHQVIVVAPDTSPRGEQVPNDAAYDLGQGAGFYLNATEQPWATNYQMYDYILNELPDLIEANFPTNGKRSIMGHSMGGHGALVLALRNRERYQSVSAFSPILSPSLVPWGEKAFSAYLGEDREKWQQYDASSLIQQGYKVQGMRIDQGLEDEFLPTQLRTEDFIETCRVANQPVDVRFHKGYDHSYYFIASFIGEHIAYHAEFLK.

Catalysis depends on charge relay system residues Ser-145, Asp-221, and His-254.

This sequence belongs to the esterase D family.

It catalyses the reaction S-formylglutathione + H2O = formate + glutathione + H(+). Functionally, serine hydrolase involved in the detoxification of formaldehyde. Hydrolyzes S-formylglutathione to glutathione and formate. This chain is S-formylglutathione hydrolase, found in Haemophilus influenzae (strain ATCC 51907 / DSM 11121 / KW20 / Rd).